Consider the following 363-residue polypeptide: Cytochrome b (363 aa).

4 helical membrane passes run 23–43 (FGFI…MLSF), 67–89 (WFVR…LHIM), 102–122 (SWYS…VGYV), and 164–184 (FFSI…FHLY). Heme b is bound by residues H73 and H87. 2 residues coordinate heme b: H168 and H182. H187 is an a ubiquinone binding site. The next 4 helical transmembrane spans lie at 210-230 (VLFS…VQSG), 271-291 (VFPT…LLVL), 310-330 (VWTT…SIGK), and 332-352 (VVHV…VLFI).

Belongs to the cytochrome b family. As to quaternary structure, the main subunits of complex b-c1 are: cytochrome b, cytochrome c1 and the Rieske protein. Heme b serves as cofactor.

The protein resides in the mitochondrion inner membrane. In terms of biological role, component of the ubiquinol-cytochrome c reductase complex (complex III or cytochrome b-c1 complex) that is part of the mitochondrial respiratory chain. The b-c1 complex mediates electron transfer from ubiquinol to cytochrome c. Contributes to the generation of a proton gradient across the mitochondrial membrane that is then used for ATP synthesis. The protein is Cytochrome b (MT-CYB) of Theileria annulata.